The sequence spans 645 residues: Chaperone protein DnaK (645 aa).

Thr-201 carries the phosphothreonine; by autocatalysis modification. Residues 606-629 (NTNNATAGDNNTTDTGSSSNSDGS) are compositionally biased toward low complexity. The segment at 606–645 (NTNNATAGDNNTTDTGSSSNSDGSKVVDSDYQEIDKKDGK) is disordered. Residues 630–645 (KVVDSDYQEIDKKDGK) are compositionally biased toward basic and acidic residues.

The protein belongs to the heat shock protein 70 family.

Its function is as follows. Acts as a chaperone. In Ehrlichia ruminantium (strain Gardel), this protein is Chaperone protein DnaK.